Here is a 203-residue protein sequence, read N- to C-terminus: AFG2-interacting ribosome maturation factor (203 aa).

As to quaternary structure, part of the 55LCC heterohexameric ATPase complex composed at least of AIRIM, AFG2A, AFG2B and CINP. Does not associate with pre-60S ribosomal particles. Phosphorylated on serines by CK2 kinase.

The protein localises to the nucleus. It is found in the cytoplasm. Functionally, part of the 55LCC heterohexameric ATPase complex which is chromatin-associated and promotes replisome proteostasis to maintain replication fork progression and genome stability. Required for replication fork progression, sister chromatid cohesion, and chromosome stability. The ATPase activity is specifically enhanced by replication fork DNA and is coupled to cysteine protease-dependent cleavage of replisome substrates in response to replication fork damage. Uses ATPase activity to process replisome substrates in S-phase, facilitating their proteolytic turnover from chromatin to ensure DNA replication and mitotic fidelity. Involved in the cytoplasmic maturation steps of pre-60S ribosomal particles by promoting the release of shuttling protein RSL24D1/RLP24 from the pre-ribosomal particles. In Homo sapiens (Human), this protein is AFG2-interacting ribosome maturation factor.